The following is a 535-amino-acid chain: EH domain-containing protein 3 (535 aa).

An N-acetylmethionine modification is found at M1. Residues 55–286 (FDNKPMVLLV…DLFKDIQSLP (232 aa)) form the Dynamin-type G domain. The tract at residues 65 to 72 (GQYSTGKT) is G1 motif. 65–72 (GQYSTGKT) contributes to the ATP binding site. The tract at residues 91 to 92 (EP) is G2 motif. The segment at 153-156 (DTPG) is G3 motif. A coiled-coil region spans residues 198–227 (DEFSEVIKALKNHEDKMRVVLNKADQIETQ). A G4 motif region spans residues 219–222 (NKAD). An ATP-binding site is contributed by K220. A region of interest (G5 motif) is located at residue I243. An ATP-binding site is contributed by W258. K315 participates in a covalent cross-link: Glycyl lysine isopeptide (Lys-Gly) (interchain with G-Cter in SUMO). 2 positions are modified to phosphoserine: S349 and S456. The EH domain occupies 444–532 (DKPMYDEIFY…AHLLPPSKRK (89 aa)). The EF-hand domain maps to 476 to 511 (LPNSVLGKIWKLADIDKDGMLDDEEFALANHLIKVK). Residues D489, D491, D493, M495, and E500 each contribute to the Ca(2+) site. A Glycyl lysine isopeptide (Lys-Gly) (interchain with G-Cter in SUMO) cross-link involves residue K511.

It belongs to the TRAFAC class dynamin-like GTPase superfamily. Dynamin/Fzo/YdjA family. EHD subfamily. In terms of assembly, homooligomer, and heterooligomer with EHD1, EHD2 and EHD4, ATP-binding is required for heterooligomerization. Interacts with PACSIN1. Interacts with PACSIN2. Interacts (via EH domain) with MICALL1. Interacts (via EH domain) with RAB11FIP2. Interacts with ANK2. Interacts with CACNA1GG and CACNA1H.

The protein localises to the recycling endosome membrane. It is found in the cell membrane. The protein resides in the cell projection. Its subcellular location is the cilium membrane. ATP- and membrane-binding protein that controls membrane reorganization/tubulation upon ATP hydrolysis. In vitro causes tubulation of endocytic membranes. Binding to phosphatidic acid induces its membrane tubulation activity. Plays a role in endocytic transport. Involved in early endosome to recycling endosome compartment (ERC), retrograde early endosome to Golgi, and endosome to plasma membrane (rapid recycling) protein transport. Involved in the regulation of Golgi maintenance and morphology. Involved in the recycling of internalized D1 dopamine receptor. Plays a role in cardiac protein trafficking probably implicating ANK2. Involved in the ventricular membrane targeting of SLC8A1 and CACNA1C and probably the atrial membrane localization of CACNA1GG and CACNA1H implicated in the regulation of atrial myocyte excitability and cardiac conduction. In conjunction with EHD4 may be involved in endocytic trafficking of KDR/VEGFR2 implicated in control of glomerular function. Involved in the rapid recycling of integrin beta-3 implicated in cell adhesion maintenance. Involved in the unidirectional retrograde dendritic transport of endocytosed BACE1 and in efficient sorting of BACE1 to axons implicating a function in neuronal APP processing. Plays a role in the formation of the ciliary vesicle, an early step in cilium biogenesis; possibly sharing redundant functions with Ehd1. This is EH domain-containing protein 3 from Rattus norvegicus (Rat).